The chain runs to 373 residues: Erythronate-4-phosphate dehydrogenase (373 aa).

Positions 45 and 67 each coordinate substrate. NAD(+) contacts are provided by residues D147, 207 to 209 (ASR), and D233. Residue R209 is part of the active site. E238 is an active-site residue. The Proton donor role is filled by H255. G258 serves as a coordination point for NAD(+).

The protein belongs to the D-isomer specific 2-hydroxyacid dehydrogenase family. PdxB subfamily. Homodimer.

It is found in the cytoplasm. It catalyses the reaction 4-phospho-D-erythronate + NAD(+) = (R)-3-hydroxy-2-oxo-4-phosphooxybutanoate + NADH + H(+). It participates in cofactor biosynthesis; pyridoxine 5'-phosphate biosynthesis; pyridoxine 5'-phosphate from D-erythrose 4-phosphate: step 2/5. Functionally, catalyzes the oxidation of erythronate-4-phosphate to 3-hydroxy-2-oxo-4-phosphonooxybutanoate. The sequence is that of Erythronate-4-phosphate dehydrogenase from Pseudoalteromonas translucida (strain TAC 125).